Here is an 85-residue protein sequence, read N- to C-terminus: Large ribosomal subunit protein bL27 (85 aa).

Positions 1–21 (MAHKKAGGSSRNGRDSEAKRL) are disordered.

It belongs to the bacterial ribosomal protein bL27 family.

In Aeromonas hydrophila subsp. hydrophila (strain ATCC 7966 / DSM 30187 / BCRC 13018 / CCUG 14551 / JCM 1027 / KCTC 2358 / NCIMB 9240 / NCTC 8049), this protein is Large ribosomal subunit protein bL27.